The primary structure comprises 101 residues: NADH-quinone oxidoreductase subunit K (101 aa).

A run of 3 helical transmembrane segments spans residues leucine 4 to valine 24, isoleucine 30 to phenylalanine 50, and isoleucine 61 to leucine 81.

This sequence belongs to the complex I subunit 4L family. NDH-1 is composed of 14 different subunits. Subunits NuoA, H, J, K, L, M, N constitute the membrane sector of the complex.

It is found in the cell inner membrane. The enzyme catalyses a quinone + NADH + 5 H(+)(in) = a quinol + NAD(+) + 4 H(+)(out). NDH-1 shuttles electrons from NADH, via FMN and iron-sulfur (Fe-S) centers, to quinones in the respiratory chain. The immediate electron acceptor for the enzyme in this species is believed to be ubiquinone. Couples the redox reaction to proton translocation (for every two electrons transferred, four hydrogen ions are translocated across the cytoplasmic membrane), and thus conserves the redox energy in a proton gradient. The sequence is that of NADH-quinone oxidoreductase subunit K from Caulobacter vibrioides (strain ATCC 19089 / CIP 103742 / CB 15) (Caulobacter crescentus).